A 317-amino-acid polypeptide reads, in one-letter code: Acetyl-coenzyme A carboxylase carboxyl transferase subunit beta (317 aa).

The interval methionine 1–alanine 28 is disordered. The 263-residue stretch at proline 55–glutamine 317 folds into the CoA carboxyltransferase N-terminal domain. Residues cysteine 59, cysteine 62, cysteine 78, and cysteine 81 each coordinate Zn(2+). The segment at cysteine 59–cysteine 81 adopts a C4-type zinc-finger fold.

The protein belongs to the AccD/PCCB family. In terms of assembly, acetyl-CoA carboxylase is a heterohexamer composed of biotin carboxyl carrier protein (AccB), biotin carboxylase (AccC) and two subunits each of ACCase subunit alpha (AccA) and ACCase subunit beta (AccD). Zn(2+) serves as cofactor.

The protein localises to the cytoplasm. It carries out the reaction N(6)-carboxybiotinyl-L-lysyl-[protein] + acetyl-CoA = N(6)-biotinyl-L-lysyl-[protein] + malonyl-CoA. It functions in the pathway lipid metabolism; malonyl-CoA biosynthesis; malonyl-CoA from acetyl-CoA: step 1/1. Functionally, component of the acetyl coenzyme A carboxylase (ACC) complex. Biotin carboxylase (BC) catalyzes the carboxylation of biotin on its carrier protein (BCCP) and then the CO(2) group is transferred by the transcarboxylase to acetyl-CoA to form malonyl-CoA. This chain is Acetyl-coenzyme A carboxylase carboxyl transferase subunit beta, found in Psychrobacter arcticus (strain DSM 17307 / VKM B-2377 / 273-4).